We begin with the raw amino-acid sequence, 320 residues long: MKFPYTRMRRLRKNSKIRSLVKETTLSKDDLIYPVFVKEGIKTKEKIPKMPGQYRYSVDELIDEAKKLEEKGLKAILVFGIPKKKDKYGSSAYDPNGIVQKSVKLLKEETDLVVITDVCLCQYTEHGHCGIVKNKKIVNDETLKYLSKVALSHAEAGADVVAPSDMMDGRVKAIREELEKNGFDDVIIMSYSAKYASSFYEPFRSAVYSSPAFGDRSTYQMDPPNSLEALREVKLDIDEGADIVMVKPALPYLDIIRLVKDTFGVPTAAYNVSGEYSMIKAAIDANYLSNKVIIETLLSIKRAGADLIITHFAPEIVEEI.

Zn(2+)-binding residues include C119, C121, and C129. K194 acts as the Schiff-base intermediate with substrate in catalysis. Residues R204 and R216 each contribute to the 5-aminolevulinate site. E232 is a Mg(2+) binding site. Catalysis depends on K247, which acts as the Schiff-base intermediate with substrate. Position 273 (S273) interacts with 5-aminolevulinate.

Belongs to the ALAD family. In terms of assembly, homooctamer. Zn(2+) serves as cofactor.

The enzyme catalyses 2 5-aminolevulinate = porphobilinogen + 2 H2O + H(+). It participates in porphyrin-containing compound metabolism; protoporphyrin-IX biosynthesis; coproporphyrinogen-III from 5-aminolevulinate: step 1/4. Catalyzes an early step in the biosynthesis of tetrapyrroles. Binds two molecules of 5-aminolevulinate per subunit, each at a distinct site, and catalyzes their condensation to form porphobilinogen. The chain is Delta-aminolevulinic acid dehydratase (hemB) from Methanothermus sociabilis.